A 111-amino-acid polypeptide reads, in one-letter code: Phosphoribosyl-ATP pyrophosphatase (111 aa).

The protein belongs to the PRA-PH family.

It is found in the cytoplasm. It carries out the reaction 1-(5-phospho-beta-D-ribosyl)-ATP + H2O = 1-(5-phospho-beta-D-ribosyl)-5'-AMP + diphosphate + H(+). It functions in the pathway amino-acid biosynthesis; L-histidine biosynthesis; L-histidine from 5-phospho-alpha-D-ribose 1-diphosphate: step 2/9. The polypeptide is Phosphoribosyl-ATP pyrophosphatase (Pseudomonas putida (strain W619)).